The chain runs to 213 residues: uncharacterized protein (213 aa).

The N-terminal stretch at 1 to 21 (MKKILFLTVICFCLSSIKAYA) is a signal peptide.

This is an uncharacterized protein from Rickettsia prowazekii (strain Madrid E).